We begin with the raw amino-acid sequence, 211 residues long: Proteasome subunit beta 2 (211 aa).

Residues 1-17 (MVIMGNELQLENKILKG) constitute a propeptide, removed in mature form; by autocatalysis. The active-site Nucleophile is Thr18.

It belongs to the peptidase T1B family. As to quaternary structure, the 20S proteasome core is composed of 14 alpha and 14 beta subunits that assemble into four stacked heptameric rings, resulting in a barrel-shaped structure. The two inner rings, each composed of seven catalytic beta subunits, are sandwiched by two outer rings, each composed of seven alpha subunits. The catalytic chamber with the active sites is on the inside of the barrel. Has a gated structure, the ends of the cylinder being occluded by the N-termini of the alpha-subunits. Is capped at one or both ends by the proteasome regulatory ATPase, PAN.

It localises to the cytoplasm. It catalyses the reaction Cleavage of peptide bonds with very broad specificity.. The formation of the proteasomal ATPase PAN-20S proteasome complex, via the docking of the C-termini of PAN into the intersubunit pockets in the alpha-rings, triggers opening of the gate for substrate entry. Interconversion between the open-gate and close-gate conformations leads to a dynamic regulation of the 20S proteasome proteolysis activity. Component of the proteasome core, a large protease complex with broad specificity involved in protein degradation. This Saccharolobus solfataricus (strain 98/2) (Sulfolobus solfataricus) protein is Proteasome subunit beta 2.